The sequence spans 226 residues: MKMVAPWTRFYSNSCCLCCHVRTGTILLGVWYLIINAVVLLILLSALADPDQYHFSSSELGGDFEFMDDANMCIAIAISLLMILICAMATYGAYKQRAAWIIPFFCYQIFDFALNTLVAITVLVYPNSIQEYIRQLPPNFPYRDDVMSVNPTCLVLIILLFISIILTFKGYLISCVWNCYRYINGRNSSDVLVYVTSNDTTVLLPPYDDATVNGAAKEPPPPYVSA.

A run of 4 helical transmembrane segments spans residues Ile-26–Ala-46, Met-72–Gly-92, Trp-100–Ile-120, and Cys-153–Ile-173. Residues Pro-205–Pro-221 are required for NEDD4 interaction.

Belongs to the LAPTM4/LAPTM5 transporter family. In terms of assembly, homooligomer; upon reaching the lysosomes. Interacts with MCOLN1. Interacts with NEDD4; may play a role in the lysosomal sorting of LAPTM4B; enhances HGS association with NEDD4; mediates inhibition of EGFR degradation. Interacts with PIP5K1C; promotes SNX5 association with LAPTM4B; kinase activity of PIP5K1C is required; interaction is regulated by phosphatidylinositol 4,5-bisphosphate generated by PIP5K1C. Interacts with HGS; promotes HGS ubiquitination. Interacts with SNX5. Interacts with SLC3A2 and SLC7A5; recruits SLC3A2 and SLC7A5 to lysosomes to promote leucine uptake into these organelles and is required for mTORC1 activation. Interacts with LRRC32; decreases TGFB1 production in regulatory T cells. Interacts with BECN1; competes with EGFR for LAPTM4B binding; regulates EGFR activity. Interacts with EGFR; positively correlates with EGFR activation. Post-translationally, undergoes proteolytic cleavage following delivery to the lysosomes. Ubiquitinated by NEDD4.

The protein resides in the endomembrane system. Its subcellular location is the late endosome membrane. It localises to the cell membrane. The protein localises to the cell projection. It is found in the lysosome membrane. The protein resides in the endosome membrane. Its subcellular location is the endosome. It localises to the multivesicular body membrane. The protein localises to the multivesicular body lumen. Required for optimal lysosomal function. Blocks EGF-stimulated EGFR intraluminal sorting and degradation. Conversely by binding with the phosphatidylinositol 4,5-bisphosphate, regulates its PIP5K1C interaction, inhibits HGS ubiquitination and relieves LAPTM4B inhibition of EGFR degradation. Recruits SLC3A2 and SLC7A5 (the Leu transporter) to the lysosome, promoting entry of leucine and other essential amino acid (EAA) into the lysosome, stimulating activation of proton-transporting vacuolar (V)-ATPase protein pump (V-ATPase) and hence mTORC1 activation. Plays a role as negative regulator of TGFB1 production in regulatory T cells. Binds ceramide and facilitates its exit from late endosome in order to control cell death pathways. This Macaca fascicularis (Crab-eating macaque) protein is Lysosomal-associated transmembrane protein 4B.